The following is a 401-amino-acid chain: Argininosuccinate synthase (401 aa).

Residue 8–16 (AYSGGLDTS) coordinates ATP. The L-citrulline site is built by Y86 and S91. G116 serves as a coordination point for ATP. Residues T118, N122, and D123 each coordinate L-aspartate. N122 is an L-citrulline binding site. L-citrulline contacts are provided by R126, S175, S184, E260, and Y272.

It belongs to the argininosuccinate synthase family. Type 1 subfamily. Homotetramer.

The protein localises to the cytoplasm. The enzyme catalyses L-citrulline + L-aspartate + ATP = 2-(N(omega)-L-arginino)succinate + AMP + diphosphate + H(+). It participates in amino-acid biosynthesis; L-arginine biosynthesis; L-arginine from L-ornithine and carbamoyl phosphate: step 2/3. The protein is Argininosuccinate synthase of Clostridium kluyveri (strain ATCC 8527 / DSM 555 / NBRC 12016 / NCIMB 10680 / K1).